The following is a 294-amino-acid chain: Diaminopimelate epimerase (294 aa).

The substrate site is built by Asn-13, Gln-46, and Asn-69. The active-site Proton donor is Cys-78. Substrate is bound by residues Gly-79–Asn-80, Asn-173, Asn-206, and Glu-224–Arg-225. Cys-233 functions as the Proton acceptor in the catalytic mechanism. Gly-234 to Thr-235 contacts substrate.

It belongs to the diaminopimelate epimerase family. As to quaternary structure, homodimer.

Its subcellular location is the cytoplasm. The enzyme catalyses (2S,6S)-2,6-diaminopimelate = meso-2,6-diaminopimelate. It functions in the pathway amino-acid biosynthesis; L-lysine biosynthesis via DAP pathway; DL-2,6-diaminopimelate from LL-2,6-diaminopimelate: step 1/1. Functionally, catalyzes the stereoinversion of LL-2,6-diaminopimelate (L,L-DAP) to meso-diaminopimelate (meso-DAP), a precursor of L-lysine and an essential component of the bacterial peptidoglycan. In Variovorax paradoxus (strain S110), this protein is Diaminopimelate epimerase.